The chain runs to 38 residues: Large ribosomal subunit protein bL36 (38 aa).

The protein belongs to the bacterial ribosomal protein bL36 family.

The protein is Large ribosomal subunit protein bL36 of Porphyromonas gingivalis (strain ATCC 33277 / DSM 20709 / CIP 103683 / JCM 12257 / NCTC 11834 / 2561).